The sequence spans 276 residues: Pantothenate synthetase (276 aa).

Position 27-34 (27-34 (MGNLHDGH)) interacts with ATP. Residue histidine 34 is the Proton donor of the active site. Residue glutamine 58 coordinates (R)-pantoate. Glutamine 58 lines the beta-alanine pocket. 145–148 (GKKD) is an ATP binding site. Glutamine 151 contacts (R)-pantoate. ATP is bound by residues isoleucine 174 and 182–185 (LSSR).

Belongs to the pantothenate synthetase family. Homodimer.

Its subcellular location is the cytoplasm. The enzyme catalyses (R)-pantoate + beta-alanine + ATP = (R)-pantothenate + AMP + diphosphate + H(+). It functions in the pathway cofactor biosynthesis; (R)-pantothenate biosynthesis; (R)-pantothenate from (R)-pantoate and beta-alanine: step 1/1. Its function is as follows. Catalyzes the condensation of pantoate with beta-alanine in an ATP-dependent reaction via a pantoyl-adenylate intermediate. This is Pantothenate synthetase from Aromatoleum aromaticum (strain DSM 19018 / LMG 30748 / EbN1) (Azoarcus sp. (strain EbN1)).